The chain runs to 254 residues: Allene oxide cyclase 4, chloroplastic (254 aa).

The N-terminal 52 residues, 1-52, are a transit peptide targeting the chloroplast; that stretch reads MIMASSAAASISMITLRNLSRNHQSHQSTFLGFSRSFHNQRISSNSPGLSTR.

It belongs to the allene oxide cyclase family. In terms of tissue distribution, highly expressed in fully developed leaves.

It localises to the plastid. Its subcellular location is the chloroplast. The enzyme catalyses (9Z,13S,15Z)-12,13-epoxyoctadeca-9,11,15-trienoate = (9S,13S,15Z)-12-oxophyto-10,15-dienoate. Involved in the production of 12-oxo-phytodienoic acid (OPDA), a precursor of jasmonic acid. The protein is Allene oxide cyclase 4, chloroplastic (AOC4) of Arabidopsis thaliana (Mouse-ear cress).